Reading from the N-terminus, the 366-residue chain is Putative zinc metalloprotease slr1821 (366 aa).

Histidine 20 is a Zn(2+) binding site. The active site involves glutamate 21. Zn(2+) is bound at residue histidine 24. 3 consecutive transmembrane segments (helical) span residues 95–115 (AIVISAGVIANLVFAYFLLIG), 293–313 (AVINILPLPALDGGQLVFLLI), and 325–345 (FQMGVMQTGLVLLLSLGVFLI). A PDZ domain is found at 106–188 (LVFAYFLLIG…VPITVEVQRG (83 aa)).

The protein belongs to the peptidase M50B family. Requires Zn(2+) as cofactor.

The protein resides in the cell inner membrane. The chain is Putative zinc metalloprotease slr1821 from Synechocystis sp. (strain ATCC 27184 / PCC 6803 / Kazusa).